The following is a 279-amino-acid chain: Putative pyruvate, phosphate dikinase regulatory protein (279 aa).

ADP is bound at residue 153–160; that stretch reads GVSRTSKT.

This sequence belongs to the pyruvate, phosphate/water dikinase regulatory protein family. PDRP subfamily.

The enzyme catalyses N(tele)-phospho-L-histidyl/L-threonyl-[pyruvate, phosphate dikinase] + ADP = N(tele)-phospho-L-histidyl/O-phospho-L-threonyl-[pyruvate, phosphate dikinase] + AMP + H(+). It catalyses the reaction N(tele)-phospho-L-histidyl/O-phospho-L-threonyl-[pyruvate, phosphate dikinase] + phosphate + H(+) = N(tele)-phospho-L-histidyl/L-threonyl-[pyruvate, phosphate dikinase] + diphosphate. Bifunctional serine/threonine kinase and phosphorylase involved in the regulation of the pyruvate, phosphate dikinase (PPDK) by catalyzing its phosphorylation/dephosphorylation. In Rhodopseudomonas palustris (strain BisA53), this protein is Putative pyruvate, phosphate dikinase regulatory protein.